A 757-amino-acid polypeptide reads, in one-letter code: Endosialin (757 aa).

An N-terminal signal peptide occupies residues 1–17; it reads MLLRLLLAWAAAGPTLG. At 18 to 687 the chain is on the extracellular side; it reads QDPWAAEPRA…EHSQRDDRWL (670 aa). In terms of domain architecture, C-type lectin spans 30–156; that stretch reads GPSSCYALFP…CTLAVDGYLC (127 aa). Residue Thr-60 is glycosylated (O-linked (GalNAc...) threonine). A disulfide bond links Cys-131 and Cys-147. The Sushi domain maps to 162–232; sequence GACPALQDEA…WSRAGPLCLG (71 aa). The region spanning 312-351 is the EGF-like; calcium-binding domain; the sequence is DTDECQIAGVCQQMCVNYVGGFECYCSEGHELEADGISCS. 3 disulfides stabilise this stretch: Cys-316-Cys-326, Cys-322-Cys-335, and Cys-337-Cys-350. Thr-401, Thr-428, Thr-448, Thr-456, Thr-459, Thr-472, Thr-519, Thr-541, Thr-543, Thr-544, Thr-545, Thr-587, Thr-593, Thr-594, and Thr-595 each carry an O-linked (GalNAc...) threonine glycan. O-linked (GalNAc...) serine glycosylation is found at Ser-598 and Ser-601. Residues Thr-612 and Thr-619 are each glycosylated (O-linked (GalNAc...) threonine). Over residues 618 to 627 the composition is skewed to low complexity; sequence PTLLPSQSPT. Positions 618–662 are disordered; the sequence is PTLLPSQSPTNQTSPISPTHPHSKAPQIPREDGPSPKLALWLPSP. Residues Ser-623 and Ser-625 are each glycosylated (O-linked (GalNAc...) serine). O-linked (GalNAc...) threonine glycosylation is found at Thr-627 and Thr-630. A glycan (O-linked (GalNAc...) serine) is linked at Ser-631. O-linked (GalNAc...) threonine glycosylation occurs at Thr-636. An O-linked (GalNAc...) serine glycan is attached at Ser-640. A helical membrane pass occupies residues 688–708; that stretch reads LVALLVPTCVFLVVLLALGIV. Over 709–757 the chain is Cytoplasmic; sequence YCTRCGPHAPNKRITDCYRWVIHAGSKSPTEPMPPRGSLTGVQTCRTSV. The disordered stretch occupies residues 737–757; that stretch reads PTEPMPPRGSLTGVQTCRTSV. Phosphoserine is present on Ser-746. Over residues 748–757 the composition is skewed to polar residues; it reads TGVQTCRTSV.

In terms of assembly, interacts with PDGFRA; this interaction promotes PDGF receptor signaling pathway. Interacts with integrin beta-1/ITGB1. Interacts with insulin receptor/INSR; this interaction diminishes INSR autophosphorylation. Post-translationally, O-glycosylated with sialylated oligosaccharides. May be N-glycosylated. In terms of tissue distribution, expressed in tumor endothelial cells but absent or barely detectable in normal endothelial cells. Expressed in metastatic lesions of the liver and during angiogenesis of corpus luteum formation and wound healing. Expressed in vascular endothelial cells of malignant tumors but not in normal blood vessels. Expressed in stromal fibroblasts. Strongly expressed in pericytes. Expressed on stromal cells and cells with lymphoid morphology such a T-cells.

It localises to the membrane. In terms of biological role, cell surface glycoprotein involved in various biological processes including angiogenesis, immune response modulation, and tissue remodeling and repair. Participates in pericyte proliferation through positive modulation of the PDGF receptor signaling pathway. Acts as a scaffold for factor X, triggering allosteric changes and the spatial re-alignment of factor X with the TF-factor VIIa complex, thereby enhancing coagulation activation. Modulates the insulin signaling pathway by interacting with insulin receptor/INSR and by diminishing its capacity to be autophosphorylated in response to insulin. Also regulates LPS-induced inflammatory response in macrophages by favoring the production of proinflammatory cytokines. In human, negatively regulates T-cell proliferation compared with stromal cells where it increases proliferation. The chain is Endosialin (CD248) from Homo sapiens (Human).